Reading from the N-terminus, the 161-residue chain is V-type proton ATPase 16 kDa proteolipid subunit c 2 (161 aa).

Residues 1 to 15 are Lumenal-facing; that stretch reads MSYDLETAEHAAYAP. A helical transmembrane segment spans residues 16-36; it reads FFGYMGAASAQIFTVLGAAYG. Topologically, residues 37–58 are cytoplasmic; that stretch reads TAKSAVGICSMGVMRPELIMKS. Residues 59-79 traverse the membrane as a helical segment; it reads VIPVIMAGIIGIYGLVVAMVL. Over 80 to 98 the chain is Lumenal; sequence KGKVQAASAGYDLNKGFAH. Residues 99–119 traverse the membrane as a helical segment; sequence LAAGLTCGLCGLGAGYAIGIV. The Cytoplasmic segment spans residues 120 to 137; the sequence is GDAGVRGTAQQPRLFVGM. A helical membrane pass occupies residues 138–158; the sequence is ILILIFSEVLGLYGMIVALIL. Residues 159–161 are Lumenal-facing; it reads GTS.

It belongs to the V-ATPase proteolipid subunit family. As to quaternary structure, V-ATPase is a heteromultimeric enzyme made up of two complexes: the ATP-hydrolytic V1 complex and the proton translocation V0 complex. The V1 complex consists of three catalytic AB heterodimers that form a heterohexamer, three peripheral stalks each consisting of EG heterodimers, one central rotor including subunits D and F, and the regulatory subunits C and H. The proton translocation complex V0 consists of the proton transport subunit a, a ring of proteolipid subunits c9c'', rotary subunit d, subunits e and f, and the accessory subunits vah-19/Ac45 and vah-20/PRR.

It is found in the membrane. Functionally, proton-conducting pore forming subunit of the V0 complex of vacuolar(H+)-ATPase (V-ATPase), a multisubunit enzyme composed of a peripheral complex (V1) that hydrolyzes ATP and a membrane integral complex (V0) that translocates protons. V-ATPase is responsible for acidifying and maintaining the pH of intracellular compartments and in some cell types, is targeted to the plasma membrane, where it is responsible for acidifying the extracellular environment. Involved in necrotic cell death. Required along with other vacuolar ATPase components for the removal of protein aggregates which form in immature oocytes in the distal gonad. This removal occurs as the oocytes mature and move to the proximal gonad, is triggered by the introduction of sperm through mating and occurs before fertilization. The introduction of sperm triggers V-ATPase accumulation in proximal oocytes and induces lysosomal acidification which leads to engulfing of protein aggregates by lysosomes and subsequent clearance of the aggregates. Lysosomal acidification also leads to changes in mitochondrial morphology and function. Mitochondria in distal immature oocytes are fragmented, produce high levels of reactive oxygen species (ROS) and have high membrane potential, indicative of metabolic inactivity. In contrast, mitochondria in proximal mature oocytes are tubular with lower ROS levels and membrane potential, indicative of an active metabolic state required for aggregate mobilization before clearance. The protein is V-type proton ATPase 16 kDa proteolipid subunit c 2 of Caenorhabditis briggsae.